The following is a 498-amino-acid chain: ATP synthase subunit beta, chloroplastic (498 aa).

172–179 serves as a coordination point for ATP; sequence GGAGVGKT.

It belongs to the ATPase alpha/beta chains family. F-type ATPases have 2 components, CF(1) - the catalytic core - and CF(0) - the membrane proton channel. CF(1) has five subunits: alpha(3), beta(3), gamma(1), delta(1), epsilon(1). CF(0) has four main subunits: a(1), b(1), b'(1) and c(9-12).

Its subcellular location is the plastid. The protein resides in the chloroplast thylakoid membrane. The enzyme catalyses ATP + H2O + 4 H(+)(in) = ADP + phosphate + 5 H(+)(out). Functionally, produces ATP from ADP in the presence of a proton gradient across the membrane. The catalytic sites are hosted primarily by the beta subunits. This is ATP synthase subunit beta, chloroplastic from Nicotiana tabacum (Common tobacco).